Reading from the N-terminus, the 165-residue chain is Shikimate kinase (165 aa).

11 to 16 (GAGKTT) is an ATP binding site. Thr15 contacts Mg(2+). 3 residues coordinate substrate: Asp33, Arg57, and Gly78. Residue Arg116 participates in ATP binding. Arg134 is a substrate binding site.

It belongs to the shikimate kinase family. As to quaternary structure, monomer. Mg(2+) is required as a cofactor.

The protein resides in the cytoplasm. It catalyses the reaction shikimate + ATP = 3-phosphoshikimate + ADP + H(+). It participates in metabolic intermediate biosynthesis; chorismate biosynthesis; chorismate from D-erythrose 4-phosphate and phosphoenolpyruvate: step 5/7. In terms of biological role, catalyzes the specific phosphorylation of the 3-hydroxyl group of shikimic acid using ATP as a cosubstrate. The sequence is that of Shikimate kinase from Bacillus anthracis (strain A0248).